The sequence spans 350 residues: Chorismate synthase (350 aa).

R39 and R45 together coordinate NADP(+). The tract at residues 85 to 104 (KDKKVPPVTRPRPGHADLPG) is disordered. Residues 119 to 121 (RAS), 213 to 214 (QG), G258, 273 to 277 (KPIPT), and R299 each bind FMN.

It belongs to the chorismate synthase family. As to quaternary structure, homotetramer. The cofactor is FMNH2.

It carries out the reaction 5-O-(1-carboxyvinyl)-3-phosphoshikimate = chorismate + phosphate. The protein operates within metabolic intermediate biosynthesis; chorismate biosynthesis; chorismate from D-erythrose 4-phosphate and phosphoenolpyruvate: step 7/7. Its function is as follows. Catalyzes the anti-1,4-elimination of the C-3 phosphate and the C-6 proR hydrogen from 5-enolpyruvylshikimate-3-phosphate (EPSP) to yield chorismate, which is the branch point compound that serves as the starting substrate for the three terminal pathways of aromatic amino acid biosynthesis. This reaction introduces a second double bond into the aromatic ring system. The chain is Chorismate synthase from Caldanaerobacter subterraneus subsp. tengcongensis (strain DSM 15242 / JCM 11007 / NBRC 100824 / MB4) (Thermoanaerobacter tengcongensis).